Reading from the N-terminus, the 699-residue chain is Cysteine--tRNA ligase (699 aa).

Residues 1-226 (MTTITEKRLT…SEQQRLIHNP (226 aa)) form a unknown region. Zn(2+) is bound at residue cysteine 254. The 'HIGH' region signature appears at 256–266 (MTVYDYCHLGH). Residues cysteine 435, histidine 460, and glutamate 464 each coordinate Zn(2+). The short motif at 508–512 (KMSKS) is the 'KMSKS' region element. Lysine 511 is an ATP binding site.

The protein belongs to the class-I aminoacyl-tRNA synthetase family. In terms of assembly, monomer. Zn(2+) serves as cofactor.

The protein resides in the cytoplasm. The catalysed reaction is tRNA(Cys) + L-cysteine + ATP = L-cysteinyl-tRNA(Cys) + AMP + diphosphate. This chain is Cysteine--tRNA ligase (cysS), found in Neisseria meningitidis serogroup A / serotype 4A (strain DSM 15465 / Z2491).